The chain runs to 1137 residues: Dendrite extension defective protein 1 (1137 aa).

Positions 1 to 41 are cleaved as a signal peptide; it reads MLAHTHRINKCLYGQNQMRNRHALLGALPPIFLLLLPLISC. At 43-1005 the chain is on the extracellular side; sequence KFDPERIAAR…HAEEQSPRLA (963 aa). The 140-residue stretch at 163–302 folds into the NIDO 1 domain; the sequence is PFWNRNDLRN…GEWMFELSEL (140 aa). N-linked (GlcNAc...) asparagine glycans are attached at residues asparagine 240 and asparagine 416. Residues 409-450 form the EGF-like; calcium-binding domain; sequence DVDECKTNSTICHKNAICTNTPGRYFCMCKEGFSGDGQNDCS. 3 disulfides stabilise this stretch: cysteine 413/cysteine 426, cysteine 420/cysteine 435, and cysteine 437/cysteine 449. In terms of domain architecture, NIDO 2 spans 519-659; the sequence is PFFGPIDLSR…GTWLYRIDKA (141 aa). Asparagine 571 is a glycosylation site (N-linked (GlcNAc...) asparagine). Polar residues predominate over residues 738-749; sequence IGNQQRQQTTKA. Disordered stretches follow at residues 738–765, 795–856, 878–897, 906–933, and 978–998; these read IGNQ…HRPI, FRPN…PFEA, QTTK…EDLS, TEED…TKAH, and NSQP…GHAE. Asparagine 756 carries an N-linked (GlcNAc...) asparagine glycan. Residues 798-809 show a composition bias toward polar residues; sequence NQRNGVQKSTQR. Basic and acidic residues predominate over residues 819 to 833; that stretch reads PLKEEATTSVPREKT. Positions 906 to 915 are enriched in acidic residues; the sequence is TEEDEEEAEI. The segment covering 916–933 has biased composition (low complexity); it reads STETTTEMSSTTTTTKAH. Residues 978-992 show a composition bias toward polar residues; that stretch reads NSQPPKQRNDNQPTV. The helical transmembrane segment at 1006 to 1026 threads the bilayer; the sequence is ILLPVMIILAWLVILVCIGAV. Over 1027-1037 the chain is Cytoplasmic; it reads VCCKRRNSRES. A disordered region spans residues 1106-1125; sequence ARLSTQERQSPPSFVNNGYT.

In terms of processing, may be proteolytically cleaved and secreted.

It is found in the membrane. It localises to the cell projection. Its subcellular location is the dendrite. The protein localises to the secreted. In terms of biological role, along with dyf-7, enables neurite growth and maintenance by anchoring amphid dendritic tips during neuron cell body migration in embryonic and larval development. Promotes seam cell remodeling during the dauer phase. Plays a role in positively regulating locomotion during the dauer phase. The protein is Dendrite extension defective protein 1 of Caenorhabditis elegans.